We begin with the raw amino-acid sequence, 57 residues long: Large ribosomal subunit protein eL20 (57 aa).

The protein belongs to the eukaryotic ribosomal protein eL20 family. Part of the 50S ribosomal subunit. Binds 23S rRNA.

This Archaeoglobus fulgidus (strain ATCC 49558 / DSM 4304 / JCM 9628 / NBRC 100126 / VC-16) protein is Large ribosomal subunit protein eL20.